Reading from the N-terminus, the 295-residue chain is Ribosomal protein L11 methyltransferase (295 aa).

Residues Thr145, Gly166, Asp188, and Asn230 each contribute to the S-adenosyl-L-methionine site.

The protein belongs to the methyltransferase superfamily. PrmA family.

Its subcellular location is the cytoplasm. The catalysed reaction is L-lysyl-[protein] + 3 S-adenosyl-L-methionine = N(6),N(6),N(6)-trimethyl-L-lysyl-[protein] + 3 S-adenosyl-L-homocysteine + 3 H(+). Functionally, methylates ribosomal protein L11. This is Ribosomal protein L11 methyltransferase from Pectobacterium carotovorum subsp. carotovorum (strain PC1).